Consider the following 725-residue polypeptide: MRLLKVATCNLNQWAMDFESNMKNIKASIAEAKAAGAVIRLGPELEVTGYGCEDHFLELDTVTHAWECLKELLLGDWTDDILCSIGMPVIKGAERYNCQVLCMNRRIIMIRPKMWLANDGNYRELRWFTAWKQREELEEFQLPIEISEALEQKSVPFGYGYIQFIDTAVAAEVCEELFSPLPPHAELALNGVEVFMNASGSHHQLRKLDIRLNAFMGATHARGGVYMYSNQQGCDGSRLYYDGCACIVVNGNVVAQGSQFSLRDVEVIISQVDLDAVASLRGSISSFQEQASCKVKVSSVAVPCRLTQSFNLKMTLSSPKKIIYHSPQEEIAFGPACWMWDYLRRSGASGFLLPLSGGADSSSVAAIVGCMCQLVVKEIAKGDEQVKADANRIGNYANGQFPTDSKEFAKRIFYTVFMGSENSSEETKRRSKQLADEIGAWHLDVCIDGVVSAVLSLFQTVTGKRPRYKVDGGSNAENLGLQNIQARMRMVLAFMLASLLPWVHSKPGFYLVLGSSNVDEGLRGYLTKYDCSSADINPIGSISKMDLRLFLKWAATNLGYPSLAEIEAAPPTAELEPIRSDYSQLDEVDMGMTYEELSVYGRMRKIFRCGPVSMFKNLCYKWGTKLSPAEVAEKVKYFFKYYSINRHKMTVLTPSYHAESYSPEDNRFDLRQFLYNSKWPYQFKKIDEIVDSLNGDSVAFPEEEANSNKEIGVVAANSGDPSAGL.

Residues Leu-4–Leu-274 form the CN hydrolase domain. Glu-44 functions as the Proton acceptor; for glutaminase activity in the catalytic mechanism. The active-site For glutaminase activity is the Lys-113. The active-site Nucleophile; for glutaminase activity is the Cys-174. The ligase stretch occupies residues Tyr-324 to Lys-709. An ATP-binding site is contributed by Pro-354–Ser-361. Residue Ser-356 is part of the active site.

The protein in the C-terminal section; belongs to the NAD synthetase family.

The catalysed reaction is deamido-NAD(+) + L-glutamine + ATP + H2O = L-glutamate + AMP + diphosphate + NAD(+) + H(+). The protein operates within cofactor biosynthesis; NAD(+) biosynthesis; NAD(+) from deamido-NAD(+) (L-Gln route): step 1/1. The chain is Glutamine-dependent NAD(+) synthetase from Arabidopsis thaliana (Mouse-ear cress).